A 444-amino-acid chain; its full sequence is Probable ribonuclease FAU-1 (444 aa).

It belongs to the FAU-1 family.

Functionally, probable RNase involved in rRNA stability through maturation and/or degradation of precursor rRNAs. Binds to RNA in loop regions with AU-rich sequences. The polypeptide is Probable ribonuclease FAU-1 (Pyrobaculum arsenaticum (strain DSM 13514 / JCM 11321 / PZ6)).